A 545-amino-acid chain; its full sequence is Bifunctional purine biosynthesis protein PurH (545 aa).

In terms of domain architecture, MGS-like spans 1–150 (MTNTNRPIRR…KNHATVAIVT (150 aa)).

This sequence belongs to the PurH family.

It catalyses the reaction (6R)-10-formyltetrahydrofolate + 5-amino-1-(5-phospho-beta-D-ribosyl)imidazole-4-carboxamide = 5-formamido-1-(5-phospho-D-ribosyl)imidazole-4-carboxamide + (6S)-5,6,7,8-tetrahydrofolate. The catalysed reaction is IMP + H2O = 5-formamido-1-(5-phospho-D-ribosyl)imidazole-4-carboxamide. It functions in the pathway purine metabolism; IMP biosynthesis via de novo pathway; 5-formamido-1-(5-phospho-D-ribosyl)imidazole-4-carboxamide from 5-amino-1-(5-phospho-D-ribosyl)imidazole-4-carboxamide (10-formyl THF route): step 1/1. It participates in purine metabolism; IMP biosynthesis via de novo pathway; IMP from 5-formamido-1-(5-phospho-D-ribosyl)imidazole-4-carboxamide: step 1/1. This chain is Bifunctional purine biosynthesis protein PurH, found in Bifidobacterium longum (strain DJO10A).